We begin with the raw amino-acid sequence, 368 residues long: N-acetylneuraminate epimerase (368 aa).

The first 19 residues, 1–19 (MNKTITALAILMASFAANA), serve as a signal peptide directing secretion. Kelch repeat units follow at residues 40–84 (TVYI…AFID), 86–137 (NLYV…FVHN), 139–173 (KAYV…KINA), 174–219 (HYFD…VNKG), 222–265 (TWLI…VAGG), 287–336 (ENYQ…PWNN), and 338–367 (LLII…VTVQ). E228 (proton acceptor) is an active-site residue.

Belongs to the NanM family. Homodimer.

Its subcellular location is the periplasm. It carries out the reaction N-acetyl-alpha-neuraminate = N-acetyl-beta-neuraminate. Converts alpha-N-acetylneuranimic acid (Neu5Ac) to the beta-anomer, accelerating the equilibrium between the alpha- and beta-anomers. Probably facilitates sialidase-negative bacteria to compete successfully for limited amounts of extracellular Neu5Ac, which is likely taken up in the beta-anomer. In addition, the rapid removal of sialic acid from solution might be advantageous to the bacterium to damp down host responses. This chain is N-acetylneuraminate epimerase, found in Escherichia coli O157:H7.